Here is a 479-residue protein sequence, read N- to C-terminus: Ribosomal RNA small subunit methyltransferase F (479 aa).

Residues 125-131, glutamate 149, aspartate 176, and aspartate 194 each bind S-adenosyl-L-methionine; that span reads AAAPGSK. The active-site Nucleophile is the cysteine 247.

Belongs to the class I-like SAM-binding methyltransferase superfamily. RsmB/NOP family.

Its subcellular location is the cytoplasm. The enzyme catalyses cytidine(1407) in 16S rRNA + S-adenosyl-L-methionine = 5-methylcytidine(1407) in 16S rRNA + S-adenosyl-L-homocysteine + H(+). Specifically methylates the cytosine at position 1407 (m5C1407) of 16S rRNA. The sequence is that of Ribosomal RNA small subunit methyltransferase F from Escherichia coli O7:K1 (strain IAI39 / ExPEC).